The chain runs to 348 residues: Phosphoribosylformylglycinamidine cyclo-ligase (348 aa).

It belongs to the AIR synthase family.

The protein resides in the cytoplasm. The catalysed reaction is 2-formamido-N(1)-(5-O-phospho-beta-D-ribosyl)acetamidine + ATP = 5-amino-1-(5-phospho-beta-D-ribosyl)imidazole + ADP + phosphate + H(+). It participates in purine metabolism; IMP biosynthesis via de novo pathway; 5-amino-1-(5-phospho-D-ribosyl)imidazole from N(2)-formyl-N(1)-(5-phospho-D-ribosyl)glycinamide: step 2/2. In Roseobacter denitrificans (strain ATCC 33942 / OCh 114) (Erythrobacter sp. (strain OCh 114)), this protein is Phosphoribosylformylglycinamidine cyclo-ligase.